The chain runs to 42 residues: Potassium channel toxin gamma-KTx 1.10 (42 aa).

Disulfide bonds link Cys-5-Cys-23, Cys-11-Cys-34, Cys-20-Cys-39, and Cys-24-Cys-41.

As to expression, expressed by the venom gland.

It localises to the secreted. Blocks human Kv11.1/KCNH2/ERG1 potassium channels (reversible, IC(50)=3.4 nM). At high toxin concentrations, block of Kv11.1/KCNH2/ERG1 macroscopic current is almost complete. Does not accelerate the kinetics of the closing process and has no effect on the activation and inactivation kinetics of the Kv11.1/KCNH2/ERG1 channels. This is Potassium channel toxin gamma-KTx 1.10 from Centruroides margaritatus (Central American bark Scorpion).